Here is a 63-residue protein sequence, read N- to C-terminus: Small ribosomal subunit protein eS17 (63 aa).

The protein belongs to the eukaryotic ribosomal protein eS17 family.

The sequence is that of Small ribosomal subunit protein eS17 from Methanococcus aeolicus (strain ATCC BAA-1280 / DSM 17508 / OCM 812 / Nankai-3).